We begin with the raw amino-acid sequence, 215 residues long: UPF0323 lipoprotein HP_0232 (215 aa).

Positions 1–27 (MKKPYRKISDYAIVGGLSALVMVSIVG) are cleaved as a signal peptide. The N-palmitoyl cysteine moiety is linked to residue Cys-28. Cys-28 carries the S-diacylglycerol cysteine lipid modification. Residues 158-169 (QRTYKSPQAYQR) show a composition bias toward polar residues. The interval 158 to 215 (QRTYKSPQAYQRSQNSFSKSAPSASSMGGASKGQSGFFGSSRPTSSPAVSSGTRGFNS) is disordered. Residues 170 to 208 (SQNSFSKSAPSASSMGGASKGQSGFFGSSRPTSSPAVSS) show a composition bias toward low complexity.

Belongs to the UPF0323 family.

The protein localises to the cell membrane. In Helicobacter pylori (strain ATCC 700392 / 26695) (Campylobacter pylori), this protein is UPF0323 lipoprotein HP_0232.